The following is a 256-amino-acid chain: NAP1-related protein 1 (256 aa).

Positions 23-64 (IDAELVLSIEKLQEIQDDLEKINEKASDEVLEVEQKYNVIRK) form a coiled coil. Positions 220 to 256 (LTYFNNDADEEDFDGDDDGDEEGEEDDDDEEEEDGEE) are disordered. The span at 226–256 (DADEEDFDGDDDGDEEGEEDDDDEEEEDGEE) shows a compositional bias: acidic residues.

Belongs to the nucleosome assembly protein (NAP) family. As to quaternary structure, can form homomeric and heteromeric protein complexes with NRP2. Binds histones H2A and H2B and associates with chromatin in vivo. In terms of tissue distribution, ubiquitous.

The protein localises to the cytoplasm. The protein resides in the nucleus. Its function is as follows. Acts as a histone H2A/H2B chaperone in nucleosome assembly, playing a critical role for the correct expression of genes involved in root proliferation and patterning. Required with NRP2 for the maintenance of cell proliferation and differentiation in postembryonic root growth. Involved in both intramolecular and intermolecular somatic homologous recombination. This Arabidopsis thaliana (Mouse-ear cress) protein is NAP1-related protein 1 (NRP1).